The following is a 436-amino-acid chain: GTPase Obg (436 aa).

Positions 2–160 constitute an Obg domain; sequence SMFLDTAKIQ…RELLLELKVL (159 aa). Residues 161 to 338 enclose the OBG-type G domain; that stretch reads ADVGLVGFPS…LLDATAELLD (178 aa). GTP contacts are provided by residues 167 to 174, 192 to 196, 214 to 217, 284 to 287, and 319 to 321; these read GFPSVGKS, FTTIV, DLPG, NKMD, and SSL. Mg(2+) is bound by residues S174 and T194. The OCT domain occupies 358 to 436; that stretch reads GFDEEAPAFE…IGKFEFEFVD (79 aa).

It belongs to the TRAFAC class OBG-HflX-like GTPase superfamily. OBG GTPase family. Monomer. Mg(2+) is required as a cofactor.

The protein resides in the cytoplasm. An essential GTPase which binds GTP, GDP and possibly (p)ppGpp with moderate affinity, with high nucleotide exchange rates and a fairly low GTP hydrolysis rate. Plays a role in control of the cell cycle, stress response, ribosome biogenesis and in those bacteria that undergo differentiation, in morphogenesis control. This is GTPase Obg from Streptococcus sanguinis (strain SK36).